Consider the following 408-residue polypeptide: tRNA wybutosine-synthesizing protein 2 homolog (408 aa).

S-adenosyl-L-methionine-binding positions include Ser201, Lys208, Glu248, and 276–277; that span reads DN.

It belongs to the class I-like SAM-binding methyltransferase superfamily. TRM5/TYW2 family.

It carries out the reaction 4-demethylwyosine(37) in tRNA(Phe) + S-adenosyl-L-methionine = 4-demethyl-7-[(3S)-3-amino-3-carboxypropyl]wyosine(37) in tRNA(Phe) + S-methyl-5'-thioadenosine + H(+). It functions in the pathway tRNA modification; wybutosine-tRNA(Phe) biosynthesis. Its function is as follows. S-adenosyl-L-methionine-dependent transferase that acts as a component of the wybutosine biosynthesis pathway. Wybutosine is a hyper modified guanosine with a tricyclic base found at the 3'-position adjacent to the anticodon of eukaryotic phenylalanine tRNA. Catalyzes the transfer of the alpha-amino-alpha-carboxypropyl (acp) group from S-adenosyl-L-methionine to the C-7 position of 4-demethylwyosine (imG-14) to produce wybutosine-86. This is tRNA wybutosine-synthesizing protein 2 homolog (trmt12) from Danio rerio (Zebrafish).